We begin with the raw amino-acid sequence, 202 residues long: Transcription factor MUTE (202 aa).

Residues 1-49 (MSHIAVERNRRRQMNEHLKSLRSLTPCFYIKRGDQASIIGGVIEFIKEL) enclose the bHLH domain.

Homodimer. In terms of tissue distribution, leaf epidermis and flowers.

It is found in the nucleus. Its function is as follows. Transcription factor. Together with FMA and SPCH, regulates the stomata formation. Required for the differentiation of stomatal guard cells, by promoting successive asymmetric cell divisions and the formation of guard mother cells. Promotes the conversion of the leaf epidermis into stomata. In Arabidopsis thaliana (Mouse-ear cress), this protein is Transcription factor MUTE (MUTE).